The following is a 461-amino-acid chain: uncharacterized protein (461 aa).

The next 2 helical transmembrane spans lie at 18-38 (IITW…FLIY) and 124-144 (FIFL…ILSI). PLD phosphodiesterase domains follow at residues 197 to 224 (YNYR…ADEY) and 374 to 401 (TPGF…DYRS).

Belongs to the phospholipase D family. Cardiolipin synthase subfamily.

Its subcellular location is the cell membrane. This is an uncharacterized protein from Streptococcus mutans serotype c (strain ATCC 700610 / UA159).